The sequence spans 114 residues: Nucleoid-associated protein MAE_23910 (114 aa).

It belongs to the YbaB/EbfC family. In terms of assembly, homodimer.

The protein resides in the cytoplasm. It is found in the nucleoid. Binds to DNA and alters its conformation. May be involved in regulation of gene expression, nucleoid organization and DNA protection. The polypeptide is Nucleoid-associated protein MAE_23910 (Microcystis aeruginosa (strain NIES-843 / IAM M-2473)).